The chain runs to 186 residues: Ribosome-recycling factor (186 aa).

This sequence belongs to the RRF family.

It localises to the cytoplasm. Functionally, responsible for the release of ribosomes from messenger RNA at the termination of protein biosynthesis. May increase the efficiency of translation by recycling ribosomes from one round of translation to another. This is Ribosome-recycling factor from Porphyromonas gingivalis (strain ATCC BAA-308 / W83).